Consider the following 58-residue polypeptide: Ribosome modulation factor (58 aa).

The span at M1 to S14 shows a compositional bias: basic residues. The tract at residues M1 to S25 is disordered.

Belongs to the ribosome modulation factor family.

The protein resides in the cytoplasm. Functionally, during stationary phase, converts 70S ribosomes to an inactive dimeric form (100S ribosomes). The sequence is that of Ribosome modulation factor from Alteromonas naphthalenivorans.